The sequence spans 82 residues: ATP synthase subunit c, chloroplastic (82 aa).

A run of 2 helical transmembrane segments spans residues 3-23 (PIISAASVIAAGLAVGLAAIG) and 57-77 (LAFMESLTIYGLVVALSLLFA).

Belongs to the ATPase C chain family. In terms of assembly, F-type ATPases have 2 components, F(1) - the catalytic core - and F(0) - the membrane proton channel. F(1) has five subunits: alpha(3), beta(3), gamma(1), delta(1), epsilon(1). F(0) has four main subunits: a(1), b(1), b'(1) and c(10-14). The alpha and beta chains form an alternating ring which encloses part of the gamma chain. F(1) is attached to F(0) by a central stalk formed by the gamma and epsilon chains, while a peripheral stalk is formed by the delta, b and b' chains.

The protein resides in the plastid. The protein localises to the chloroplast thylakoid membrane. Functionally, f(1)F(0) ATP synthase produces ATP from ADP in the presence of a proton or sodium gradient. F-type ATPases consist of two structural domains, F(1) containing the extramembraneous catalytic core and F(0) containing the membrane proton channel, linked together by a central stalk and a peripheral stalk. During catalysis, ATP synthesis in the catalytic domain of F(1) is coupled via a rotary mechanism of the central stalk subunits to proton translocation. Its function is as follows. Key component of the F(0) channel; it plays a direct role in translocation across the membrane. A homomeric c-ring of between 10-14 subunits forms the central stalk rotor element with the F(1) delta and epsilon subunits. This chain is ATP synthase subunit c, chloroplastic, found in Cyanidium caldarium (Red alga).